The primary structure comprises 383 residues: Teichoic acid glycerol-phosphate primase (383 aa).

It belongs to the CDP-glycerol glycerophosphotransferase family.

The protein localises to the cell membrane. The catalysed reaction is N-acetyl-beta-D-mannosaminyl-(1-&gt;4)-N-acetyl-alpha-D-glucosaminyl di-trans,octa-cis-undecaprenyl diphosphate + CDP-glycerol = 4-O-[(2R)-glycerylphospho]-N-acetyl-beta-D-mannosaminyl-(1-&gt;4)-N-acetyl-alpha-D-glucosaminyl di-trans,octa-cis-undecaprenyl diphosphate + CMP + H(+). It participates in cell wall biogenesis; poly(ribitol phosphate) teichoic acid biosynthesis. Functionally, catalyzes the addition of a single glycerol phosphate residue to the prenoldiphosphate-linked disaccharide. This is Teichoic acid glycerol-phosphate primase (tarB) from Bacillus spizizenii (strain ATCC 23059 / NRRL B-14472 / W23) (Bacillus subtilis subsp. spizizenii).